Consider the following 666-residue polypeptide: Fructose-1,6-bisphosphatase class 3 (666 aa).

This sequence belongs to the FBPase class 3 family. It depends on Mn(2+) as a cofactor.

It catalyses the reaction beta-D-fructose 1,6-bisphosphate + H2O = beta-D-fructose 6-phosphate + phosphate. Its pathway is carbohydrate biosynthesis; gluconeogenesis. In Parabacteroides distasonis (strain ATCC 8503 / DSM 20701 / CIP 104284 / JCM 5825 / NCTC 11152), this protein is Fructose-1,6-bisphosphatase class 3.